The primary structure comprises 290 residues: MTLPFRDDLLSSLLARCKTVPLSRFSQPLFWLLLLLLAHQCAGLTWRLLDLGSQQSSQPWQPAVAGSQGQGKARLDLGGVSRLALFGKAKQQARAADAVAADAPKTQLNAQLNGVLASSDPAKSIAIIAHSGVQNSYGIGDFIDGTQAKVRQVFADRVIIERDARDETLMLDGEEYGKPLPKQGNPDEKLSSVRSELLGNPGKITDYLNISPVRVDGRMVGYRLNPGSNPELFNQLGLVANDMAVSINGLDLRDNAQAMQAMQQVAGATEMTVTVERQGQLYDVYVGLSE.

Residues 1–28 are Cytoplasmic-facing; it reads MTLPFRDDLLSSLLARCKTVPLSRFSQP. A helical membrane pass occupies residues 29 to 46; it reads LFWLLLLLLAHQCAGLTW. The Periplasmic segment spans residues 47–290; sequence RLLDLGSQQS…LYDVYVGLSE (244 aa).

It belongs to the GSP C family.

Its subcellular location is the cell inner membrane. In terms of biological role, involved in a type II secretion system (T2SS, formerly general secretion pathway, GSP) for the export of proteins. This Aeromonas salmonicida protein is Type II secretion system protein C (exeC).